The primary structure comprises 465 residues: L-cystine uptake protein TcyP (465 aa).

The next 10 helical transmembrane spans lie at Leu3–Met23, Val34–Pro54, Tyr73–Phe93, Ile105–Ile125, Pro184–Val204, Ala224–Thr246, Phe263–Ala283, Leu338–Ala358, Phe370–Gly390, and Phe394–Ile414.

It belongs to the dicarboxylate/amino acid:cation symporter (DAACS) (TC 2.A.23) family.

The protein localises to the membrane. Its function is as follows. Mediates uptake of L-cystine, the oxidized form of L-cysteine. The protein is L-cystine uptake protein TcyP of Shouchella clausii (strain KSM-K16) (Alkalihalobacillus clausii).